The chain runs to 235 residues: Urease accessory protein UreF (235 aa).

Belongs to the UreF family. As to quaternary structure, ureD, UreF and UreG form a complex that acts as a GTP-hydrolysis-dependent molecular chaperone, activating the urease apoprotein by helping to assemble the nickel containing metallocenter of UreC. The UreE protein probably delivers the nickel.

The protein localises to the cytoplasm. Required for maturation of urease via the functional incorporation of the urease nickel metallocenter. The protein is Urease accessory protein UreF of Ureaplasma urealyticum serovar 10 (strain ATCC 33699 / Western).